A 268-amino-acid polypeptide reads, in one-letter code: Indole-3-glycerol phosphate synthase (268 aa).

The protein belongs to the TrpC family.

The enzyme catalyses 1-(2-carboxyphenylamino)-1-deoxy-D-ribulose 5-phosphate + H(+) = (1S,2R)-1-C-(indol-3-yl)glycerol 3-phosphate + CO2 + H2O. The protein operates within amino-acid biosynthesis; L-tryptophan biosynthesis; L-tryptophan from chorismate: step 4/5. In Magnetococcus marinus (strain ATCC BAA-1437 / JCM 17883 / MC-1), this protein is Indole-3-glycerol phosphate synthase.